Here is a 230-residue protein sequence, read N- to C-terminus: Thymidylate kinase (230 aa).

Residue 20 to 27 (GGEGSGKS) participates in ATP binding.

It belongs to the thymidylate kinase family.

It catalyses the reaction dTMP + ATP = dTDP + ADP. In terms of biological role, phosphorylation of dTMP to form dTDP in both de novo and salvage pathways of dTTP synthesis. The chain is Thymidylate kinase from Nitrobacter winogradskyi (strain ATCC 25391 / DSM 10237 / CIP 104748 / NCIMB 11846 / Nb-255).